A 289-amino-acid polypeptide reads, in one-letter code: Probable branched-chain-amino-acid aminotransferase (289 aa).

At Lys154 the chain carries N6-(pyridoxal phosphate)lysine.

The protein belongs to the class-IV pyridoxal-phosphate-dependent aminotransferase family. Requires pyridoxal 5'-phosphate as cofactor.

It catalyses the reaction L-leucine + 2-oxoglutarate = 4-methyl-2-oxopentanoate + L-glutamate. It carries out the reaction L-isoleucine + 2-oxoglutarate = (S)-3-methyl-2-oxopentanoate + L-glutamate. The enzyme catalyses L-valine + 2-oxoglutarate = 3-methyl-2-oxobutanoate + L-glutamate. Its pathway is amino-acid biosynthesis; L-isoleucine biosynthesis; L-isoleucine from 2-oxobutanoate: step 4/4. It functions in the pathway amino-acid biosynthesis; L-leucine biosynthesis; L-leucine from 3-methyl-2-oxobutanoate: step 4/4. It participates in amino-acid biosynthesis; L-valine biosynthesis; L-valine from pyruvate: step 4/4. Functionally, acts on leucine, isoleucine and valine. The sequence is that of Probable branched-chain-amino-acid aminotransferase (ilvE) from Rickettsia bellii (strain RML369-C).